A 97-amino-acid chain; its full sequence is MKTLAFLVLCSLAAICLTSDASTGSQPASDNPADEGMFVERDQASAVVRQKRAAGQLSLTQLESLREVCELNLACEHMMDTEGIIAAYTAYYGPIPY.

A signal peptide spans 1–18 (MKTLAFLVLCSLAAICLT). The propeptide occupies 19–52 (SDASTGSQPASDNPADEGMFVERDQASAVVRQKR). The 41-residue stretch at 53 to 93 (AAGQLSLTQLESLREVCELNLACEHMMDTEGIIAAYTAYYG) folds into the Gla domain. Residues glutamate 63, glutamate 67, glutamate 70, and glutamate 76 each contribute to the Ca(2+) site. 3 positions are modified to 4-carboxyglutamate: glutamate 63, glutamate 67, and glutamate 70. A disulfide bond links cysteine 69 and cysteine 75.

Belongs to the osteocalcin/matrix Gla protein family. Gamma-carboxyglutamate residues are formed by vitamin K dependent carboxylation by GGCX. These residues are essential for the binding of calcium.

It is found in the secreted. Its function is as follows. The carboxylated form is one of the main organic components of the bone matrix, which constitutes 1-2% of the total bone protein. The carboxylated form binds strongly to apatite and calcium. In Sparus aurata (Gilthead sea bream), this protein is Osteocalcin (bglap).